Here is a 493-residue protein sequence, read N- to C-terminus: Alpha-amylase-related protein (493 aa).

Positions 1 to 19 (MFKFATAVILCLAASSTLA) are cleaved as a signal peptide. Gln-20 bears the Pyrrolidone carboxylic acid mark. Cys-47 and Cys-103 form a disulfide bridge. Ca(2+) contacts are provided by Asn-117, Gln-168, and Asp-177. The cysteines at positions 156 and 170 are disulfide-linked. Arg-205 serves as a coordination point for chloride. The active-site Nucleophile is Asp-207. His-211 lines the Ca(2+) pocket. Residue Glu-244 is the Proton donor of the active site. Positions 307 and 342 each coordinate chloride. Cystine bridges form between Cys-375–Cys-381, Cys-417–Cys-440, and Cys-447–Cys-459.

The protein belongs to the glycosyl hydrolase 13 family. Monomer. Ca(2+) is required as a cofactor. Chloride serves as cofactor.

It is found in the secreted. It carries out the reaction Endohydrolysis of (1-&gt;4)-alpha-D-glucosidic linkages in polysaccharides containing three or more (1-&gt;4)-alpha-linked D-glucose units.. The chain is Alpha-amylase-related protein (Amyrel) from Drosophila ananassae (Fruit fly).